Reading from the N-terminus, the 229-residue chain is Serine acetyltransferase (229 aa).

This sequence belongs to the transferase hexapeptide repeat family.

The protein resides in the cytoplasm. The catalysed reaction is L-serine + acetyl-CoA = O-acetyl-L-serine + CoA. Its pathway is amino-acid biosynthesis; L-cysteine biosynthesis; L-cysteine from L-serine: step 1/2. Its function is as follows. Catalyzes the acetylation of serine by acetyl-CoA to produce O-acetylserine (OAS). In Mycobacterium tuberculosis (strain ATCC 25618 / H37Rv), this protein is Serine acetyltransferase (cysE).